A 365-amino-acid chain; its full sequence is 3-isopropylmalate dehydrogenase (365 aa).

Substrate-binding residues include Arg-96, Arg-106, Arg-134, and Asp-224. Positions 224, 248, and 252 each coordinate Mg(2+). 288-300 (GSAPTIAKQNIAN) is an NAD(+) binding site.

It belongs to the isocitrate and isopropylmalate dehydrogenases family. LeuB type 1 subfamily. Homodimer. Mg(2+) serves as cofactor. Requires Mn(2+) as cofactor.

Its subcellular location is the cytoplasm. It catalyses the reaction (2R,3S)-3-isopropylmalate + NAD(+) = 4-methyl-2-oxopentanoate + CO2 + NADH. Its pathway is amino-acid biosynthesis; L-leucine biosynthesis; L-leucine from 3-methyl-2-oxobutanoate: step 3/4. Its function is as follows. Catalyzes the oxidation of 3-carboxy-2-hydroxy-4-methylpentanoate (3-isopropylmalate) to 3-carboxy-4-methyl-2-oxopentanoate. The product decarboxylates to 4-methyl-2 oxopentanoate. The polypeptide is 3-isopropylmalate dehydrogenase (Dehalococcoides mccartyi (strain ATCC BAA-2266 / KCTC 15142 / 195) (Dehalococcoides ethenogenes (strain 195))).